A 1324-amino-acid chain; its full sequence is Myotubularin-related protein DDB_G0290005 (1324 aa).

Residues 140–276 (KYHDNTTPNN…TSSTNGNCST (137 aa)) are disordered. The span at 144–180 (NTTPNNNNNNNNNNNNNNNNTNNNNNNNINKSNNSST) shows a compositional bias: low complexity. Residues 181-194 (DQLNSFSLEKQPSQ) are compositionally biased toward polar residues. Residues 195 to 222 (NENLNNNNNNNNNNNNGNNNINNNNLMN) are compositionally biased toward low complexity. Residues 223 to 247 (SLTQPSTSSRSRLLKSNSTPINLNE) show a composition bias toward polar residues. The segment covering 248 to 276 (SSTSTNSPTLSSTTTTTTTTSSTNGNCST) has biased composition (low complexity). Residues 349 to 807 (GWLFYDPIEE…KGVQLWSDYF (459 aa)) enclose the Myotubularin phosphatase domain. Residues 514 to 515 (NI), 575 to 581 (CIDGWDR), and arginine 621 contribute to the substrate site. Cysteine 575 functions as the Phosphocysteine intermediate in the catalytic mechanism. Disordered regions lie at residues 624 to 664 (QSIS…TTTS), 841 to 1043 (QKKK…QQQE), 1066 to 1110 (EQQE…QQQT), 1144 to 1213 (RKQE…LTMP), and 1232 to 1296 (LHPN…DNTS). Low complexity-rich tracts occupy residues 625–664 (SISS…TTTS) and 852–864 (GASG…SGSS). The span at 865-882 (SKHHHHHHHHHHHHHHRK) shows a compositional bias: basic residues. Positions 883–894 (STDEKDSKEKSS) are enriched in basic and acidic residues. Composition is skewed to low complexity over residues 899 to 914 (SRTS…STSS) and 927 to 973 (TITT…TTTP). Basic and acidic residues predominate over residues 988–1002 (DKLKSPSGDDIKQEQ). Over residues 1005-1024 (MNQFTSQHPNNQMESSSEIN) the composition is skewed to polar residues. Positions 1020 to 1195 (SSEINQQNEQ…LEQQKPKADI (176 aa)) form a coiled coil. Low complexity predominate over residues 1025–1043 (QQNEQSQLEQQQEQQQQQE). Over residues 1079 to 1090 (PNETITYSMESD) the composition is skewed to polar residues. A compositionally biased stretch (low complexity) spans 1091-1109 (SQSSISQNQNQLQQQQQQQ). The segment covering 1144–1193 (RKQEKEKRKLEKEKKQKERAERKLEKEKKRDQKEREQKEKELLEQQKPKA) has biased composition (basic and acidic residues). Residues 1234 to 1243 (PNLSDQNSQT) show a composition bias toward polar residues. Low complexity-rich tracts occupy residues 1244-1258 (NSSG…NSPN) and 1265-1294 (SNLS…NNDN).

The protein belongs to the protein-tyrosine phosphatase family. Non-receptor class myotubularin subfamily.

The protein resides in the cytoplasm. In terms of biological role, phosphatase that acts on lipids with a phosphoinositol headgroup. In Dictyostelium discoideum (Social amoeba), this protein is Myotubularin-related protein DDB_G0290005.